Here is a 323-residue protein sequence, read N- to C-terminus: tRNA dimethylallyltransferase (323 aa).

12 to 19 (GPTAAGKT) lines the ATP pocket. 14-19 (TAAGKT) provides a ligand contact to substrate. Interaction with substrate tRNA stretches follow at residues 37–40 (DSAL) and 161–165 (QRLMR).

This sequence belongs to the IPP transferase family. As to quaternary structure, monomer. Requires Mg(2+) as cofactor.

The enzyme catalyses adenosine(37) in tRNA + dimethylallyl diphosphate = N(6)-dimethylallyladenosine(37) in tRNA + diphosphate. Its function is as follows. Catalyzes the transfer of a dimethylallyl group onto the adenine at position 37 in tRNAs that read codons beginning with uridine, leading to the formation of N6-(dimethylallyl)adenosine (i(6)A). The sequence is that of tRNA dimethylallyltransferase from Pseudomonas paraeruginosa (strain DSM 24068 / PA7) (Pseudomonas aeruginosa (strain PA7)).